The primary structure comprises 480 residues: Glycerol-3-phosphate transporter (480 aa).

The Cytoplasmic segment spans residues 1-36 (MFGPFKPAPHIAELPAEKIDSTYKRLRWQVFAGIFF). The helical transmembrane segment at 37 to 57 (GYAAYYFVRANFDLAQPGLIQ) threads the bilayer. At 58-64 (AGLYSKA) the chain is on the periplasmic side. Residues 65–85 (ELGVIGSAAGLAYGLSKFVMA) form a helical membrane-spanning segment. The Cytoplasmic portion of the chain corresponds to 86–94 (GMSDRSNPR). The chain crosses the membrane as a helical span at residues 95–113 (VFLPFGLLLSGLCMTLMGL). Residues 114-121 (FPWATSGI) are Periplasmic-facing. Residues 122-142 (AIMWVMIFLNGWFQGMGWPPC) traverse the membrane as a helical segment. Residues 143 to 161 (GRTMVHWWSKSERGTIVSI) lie on the Cytoplasmic side of the membrane. Residues 162–181 (WNTAHNIGGMVPGAMVLLAS) form a helical membrane-spanning segment. Residues 182–201 (AIFFSTHGIEAQAKDVWQQS) are Periplasmic-facing. The helical transmembrane segment at 202–219 (LYFPGIAAMIFAIPVYFV) threads the bilayer. At 220–274 (MRDTPQSCGLPSIEKWRNDYPDDYNEKTYENDLTAKEIFVTYVLKNKLLWYIAIA) the chain is on the cytoplasmic side. A helical transmembrane segment spans residues 275-295 (NVFVYLIRYGVLKWSPVYLSE). At 296 to 300 (VKHFN) the chain is on the periplasmic side. The chain crosses the membrane as a helical span at residues 301–321 (IKGTAWAYTIYELAAVPGTLL). Over 322–334 (CGWVSDKVFKGKR) the chain is Cytoplasmic. A helical transmembrane segment spans residues 335-354 (GLTGFIFMILTTAAVVAYWM). At 355–359 (NPATP) the chain is on the periplasmic side. A helical membrane pass occupies residues 360–396 (EAELANYSAWYENPYQLTDFVLMTLIGFLIYGPVMLI). Residues 397-415 (GLHALELAPKKAAGTAAGF) lie on the Cytoplasmic side of the membrane. Residues 416–437 (TGLFGYLGGTVSASAVIGWAAQ) form a helical membrane-spanning segment. The Periplasmic segment spans residues 438 to 442 (HYGWD). Residues 443–463 (GGFYVMIGGGVLAVLLLLIVM) traverse the membrane as a helical segment. Topologically, residues 464–479 (VEEGKHKAKLGDTYGT) are cytoplasmic.

It belongs to the major facilitator superfamily. Organophosphate:Pi antiporter (OPA) (TC 2.A.1.4) family.

Its subcellular location is the cell inner membrane. Its function is as follows. Responsible for glycerol-3-phosphate uptake. This is Glycerol-3-phosphate transporter (glpT) from Haemophilus influenzae (strain ATCC 51907 / DSM 11121 / KW20 / Rd).